A 138-amino-acid chain; its full sequence is Transcription antitermination protein NusB (138 aa).

This sequence belongs to the NusB family.

Involved in transcription antitermination. Required for transcription of ribosomal RNA (rRNA) genes. Binds specifically to the boxA antiterminator sequence of the ribosomal RNA (rrn) operons. This Helicobacter acinonychis (strain Sheeba) protein is Transcription antitermination protein NusB.